The sequence spans 602 residues: Aspartate--tRNA(Asp/Asn) ligase (602 aa).

Glutamate 175 contacts L-aspartate. The aspartate stretch occupies residues glutamine 199–lysine 202. Arginine 221 contributes to the L-aspartate binding site. Residues arginine 221–glutamate 223 and glutamine 230 each bind ATP. Histidine 458 contributes to the L-aspartate binding site. Glutamate 492 is an ATP binding site. Arginine 499 lines the L-aspartate pocket. An ATP-binding site is contributed by glycine 544 to arginine 547.

It belongs to the class-II aminoacyl-tRNA synthetase family. Type 1 subfamily. In terms of assembly, homodimer.

The protein localises to the cytoplasm. It catalyses the reaction tRNA(Asx) + L-aspartate + ATP = L-aspartyl-tRNA(Asx) + AMP + diphosphate. In terms of biological role, aspartyl-tRNA synthetase with relaxed tRNA specificity since it is able to aspartylate not only its cognate tRNA(Asp) but also tRNA(Asn). Reaction proceeds in two steps: L-aspartate is first activated by ATP to form Asp-AMP and then transferred to the acceptor end of tRNA(Asp/Asn). The protein is Aspartate--tRNA(Asp/Asn) ligase of Cupriavidus pinatubonensis (strain JMP 134 / LMG 1197) (Cupriavidus necator (strain JMP 134)).